We begin with the raw amino-acid sequence, 445 residues long: Proline--tRNA ligase (445 aa).

This sequence belongs to the class-II aminoacyl-tRNA synthetase family. ProS type 2 subfamily. As to quaternary structure, homodimer.

Its subcellular location is the cytoplasm. The catalysed reaction is tRNA(Pro) + L-proline + ATP = L-prolyl-tRNA(Pro) + AMP + diphosphate. Its function is as follows. Catalyzes the attachment of proline to tRNA(Pro) in a two-step reaction: proline is first activated by ATP to form Pro-AMP and then transferred to the acceptor end of tRNA(Pro). The chain is Proline--tRNA ligase from Caulobacter sp. (strain K31).